A 503-amino-acid polypeptide reads, in one-letter code: N-fatty-acyl-amino acid synthase/hydrolase PM20D1 (503 aa).

The N-terminal stretch at 1 to 24 (MAELLASLPAWAAVLLLFFATVSG) is a signal peptide. N-linked (GlcNAc...) asparagine glycosylation is present at asparagine 72. Histidine 125 serves as a coordination point for Zn(2+). Aspartate 127 is a catalytic residue. Residue aspartate 157 coordinates Zn(2+). Glutamate 191 functions as the Proton acceptor in the catalytic mechanism. Positions 192 and 218 each coordinate Zn(2+). Asparagine 443 carries N-linked (GlcNAc...) asparagine glycosylation. Histidine 465 provides a ligand contact to Zn(2+).

It belongs to the peptidase M20A family. The cofactor is Zn(2+). In terms of tissue distribution, in addition to being detected in blood (at protein level), PM20D1 is also highly expressed in other tissues including brown adipocytes, liver and kidney. It is also expressed in small intestine, large intestine, heart and pancreas.

The protein localises to the secreted. It carries out the reaction an N-acyl-L-amino acid + H2O = an L-alpha-amino acid + a carboxylate. The enzyme catalyses an N-acyl-aromatic L-alpha-amino acid + H2O = an aromatic L-alpha-amino acid + a carboxylate. It catalyses the reaction N-(5Z,8Z,11Z,14Z)-eicosatetraenoyl-glycine + H2O = (5Z,8Z,11Z,14Z)-eicosatetraenoate + glycine. The catalysed reaction is N-hexadecanoyl-L-phenylalanine + H2O = hexadecanoate + L-phenylalanine. It carries out the reaction N-octadecanoyl-L-phenylalanine + H2O = octadecanoate + L-phenylalanine. The enzyme catalyses N-(4Z,7Z,10Z,13Z,16Z,19Z-docosahexaenoyl)-L-phenylalanine + H2O = (4Z,7Z,10Z,13Z,16Z,19Z)-docosahexaenoate + L-phenylalanine. It catalyses the reaction N-(9Z-octadecenoyl)-L-asparagine + H2O = L-asparagine + (9Z)-octadecenoate. The catalysed reaction is (9Z)-octadecenoate + glycine = N-(9Z-octadecenoyl)glycine + H2O. It carries out the reaction N-(9Z-octadecenoyl)-L-lysine + H2O = L-lysine + (9Z)-octadecenoate. The enzyme catalyses N-(9Z-octadecenoyl)-L-methionine + H2O = (9Z)-octadecenoate + L-methionine. It catalyses the reaction N-(9Z-octadecenoyl)-L-serine + H2O = L-serine + (9Z)-octadecenoate. The catalysed reaction is N-(9Z-octadecenoyl)-L-tryptophan + H2O = L-tryptophan + (9Z)-octadecenoate. It carries out the reaction N-(9Z-octadecenoyl)-L-tyrosine + H2O = L-tyrosine + (9Z)-octadecenoate. The enzyme catalyses N-(9Z-octadecenoyl)-L-glutamine + H2O = L-glutamine + (9Z)-octadecenoate. It catalyses the reaction N-(5Z,8Z,11Z,14Z-eicosatetraenoyl)-L-serine + H2O = (5Z,8Z,11Z,14Z)-eicosatetraenoate + L-serine. The catalysed reaction is (5Z,8Z,11Z,14Z)-eicosatetraenoate + L-phenylalanine = N-(5Z,8Z,11Z,14Z-eicosatetraenoyl)-L-phenylalanine + H2O. It carries out the reaction N-(9Z-octadecenoyl)-L-leucine + H2O = L-leucine + (9Z)-octadecenoate. The enzyme catalyses L-phenylalanine + (9Z)-octadecenoate = N-(9Z-octadecenoyl)-L-phenylalanine + H2O. It participates in amino-acid metabolism. It functions in the pathway energy metabolism; electron transfer. Its pathway is lipid metabolism; fatty acid metabolism. With respect to regulation, lipoproteins are powerful coactivators of PM20D1 activity in vitro and NAA biosynthesis in vivo. Functionally, secreted enzyme that regulates the endogenous N-fatty acyl amino acid (NAAs) tissue and circulating levels by functioning as a bidirectional NAA synthase/hydrolase. It condenses free fatty acids and free amino acids to generate NAAs and bidirectionally catalyzes the reverse hydrolysis reaction. Some of these NAAs stimulate oxidative metabolism via mitochondrial uncoupling, increasing energy expenditure in a UPC1-independent manner. Thereby, this secreted protein may indirectly regulate whole body energy expenditure. PM20D1 circulates in tight association with both low- and high-density (LDL and HDL,respectively) lipoprotein particles. The protein is N-fatty-acyl-amino acid synthase/hydrolase PM20D1 of Mus musculus (Mouse).